The chain runs to 208 residues: Uracil phosphoribosyltransferase (208 aa).

5-phospho-alpha-D-ribose 1-diphosphate is bound by residues Arg78, Arg103, and 130-138 (DPMLATGGS). Uracil is bound by residues Ile193 and 198–200 (GDA). Asp199 is a binding site for 5-phospho-alpha-D-ribose 1-diphosphate.

It belongs to the UPRTase family. The cofactor is Mg(2+).

The catalysed reaction is UMP + diphosphate = 5-phospho-alpha-D-ribose 1-diphosphate + uracil. The protein operates within pyrimidine metabolism; UMP biosynthesis via salvage pathway; UMP from uracil: step 1/1. With respect to regulation, allosterically activated by GTP. Functionally, catalyzes the conversion of uracil and 5-phospho-alpha-D-ribose 1-diphosphate (PRPP) to UMP and diphosphate. This chain is Uracil phosphoribosyltransferase, found in Haemophilus influenzae (strain PittEE).